The primary structure comprises 120 residues: Ribosome-binding factor A (120 aa).

Belongs to the RbfA family. As to quaternary structure, monomer. Binds 30S ribosomal subunits, but not 50S ribosomal subunits or 70S ribosomes.

The protein localises to the cytoplasm. One of several proteins that assist in the late maturation steps of the functional core of the 30S ribosomal subunit. Associates with free 30S ribosomal subunits (but not with 30S subunits that are part of 70S ribosomes or polysomes). Required for efficient processing of 16S rRNA. May interact with the 5'-terminal helix region of 16S rRNA. This is Ribosome-binding factor A from Rickettsia africae (strain ESF-5).